The chain runs to 255 residues: Borealin-2 (255 aa).

Disordered regions lie at residues 1 to 24 (MAPR…HSFE) and 107 to 156 (IQKP…STGS). Positions 124-135 (AGQQRSSSQSKT) are enriched in polar residues.

This sequence belongs to the borealin family. Component of the CPC complex.

It is found in the nucleus. Its subcellular location is the chromosome. The protein resides in the centromere. In terms of biological role, component of the chromosomal passenger complex (CPC), a complex that acts as a key regulator of mitosis. The CPC complex has essential functions at the centromere in ensuring correct chromosome alignment and segregation and is required for chromatin-induced microtubule stabilization and spindle assembly. This is Borealin-2 (cdca9) from Danio rerio (Zebrafish).